We begin with the raw amino-acid sequence, 119 residues long: Beta-2-microglobulin (119 aa).

A signal peptide spans 1–21 (MGKAAAVVLVTLVALLGLAQA). An Ig-like C1-type domain is found at 25–113 (PKVQVYSRFP…HETLKEPQVY (89 aa)). A disulfide bond links Cys-45 and Cys-100.

Belongs to the beta-2-microglobulin family. As to quaternary structure, heterodimer of an alpha chain and a beta chain. Beta-2-microglobulin is the beta-chain of major histocompatibility complex class I molecules.

The protein resides in the secreted. Component of the class I major histocompatibility complex (MHC). Involved in the presentation of peptide antigens to the immune system. The polypeptide is Beta-2-microglobulin (B2M) (Gallus gallus (Chicken)).